A 683-amino-acid polypeptide reads, in one-letter code: DNA-directed RNA polymerase subunit beta' (683 aa).

Zn(2+)-binding residues include C69, C71, C87, and C90. Mg(2+) is bound by residues D489, D491, and D493.

It belongs to the RNA polymerase beta' chain family. RpoC1 subfamily. As to quaternary structure, in plastids the minimal PEP RNA polymerase catalytic core is composed of four subunits: alpha, beta, beta', and beta''. When a (nuclear-encoded) sigma factor is associated with the core the holoenzyme is formed, which can initiate transcription. Mg(2+) serves as cofactor. Zn(2+) is required as a cofactor.

The protein localises to the plastid. It is found in the chloroplast. It catalyses the reaction RNA(n) + a ribonucleoside 5'-triphosphate = RNA(n+1) + diphosphate. Its function is as follows. DNA-dependent RNA polymerase catalyzes the transcription of DNA into RNA using the four ribonucleoside triphosphates as substrates. This chain is DNA-directed RNA polymerase subunit beta', found in Triticum aestivum (Wheat).